We begin with the raw amino-acid sequence, 833 residues long: Leucine--tRNA ligase (833 aa).

The 'HIGH' region signature appears at 41-52; it reads PYPSGAGLHVGH. The short motif at 610–614 is the 'KMSKS' region element; it reads KMSKS. ATP is bound at residue Lys613.

Belongs to the class-I aminoacyl-tRNA synthetase family.

It localises to the cytoplasm. The catalysed reaction is tRNA(Leu) + L-leucine + ATP = L-leucyl-tRNA(Leu) + AMP + diphosphate. The protein is Leucine--tRNA ligase of Streptococcus pyogenes serotype M49 (strain NZ131).